Consider the following 319-residue polypeptide: N-acyl-aromatic-L-amino acid amidohydrolase (carboxylate-forming) (319 aa).

Residues 1 to 210 are hydrolytic domain; that stretch reads MCSLPGSRKP…SILDFIELFN (210 aa). Zn(2+)-binding residues include His-21 and Glu-24. Substrate is bound by residues Arg-63 and 70-71; that span reads NR. His-116 is a Zn(2+) binding site. Residues Glu-178 and Tyr-288 each contribute to the substrate site. The shielding domain stretch occupies residues 211 to 318; that stretch reads QGMEFPAFEM…PGLTPSSTQT (108 aa). Thr-318 bears the Phosphothreonine mark.

It belongs to the AspA/AstE family. Aspartoacylase subfamily. In terms of assembly, exists as a mixture of homodimers and homotetramer, both catalytically active. Requires Zn(2+) as cofactor.

It is found in the apical cell membrane. The protein localises to the cytoplasm. It catalyses the reaction an N-acyl-aromatic L-alpha-amino acid + H2O = an aromatic L-alpha-amino acid + a carboxylate. The catalysed reaction is an N-acetyl-L-cysteine-S-conjugate + H2O = an S-substituted L-cysteine + acetate. Its function is as follows. Plays an important role in deacetylating mercapturic acids in kidney proximal tubules. Also acts on N-acetyl-aromatic amino acids. This chain is N-acyl-aromatic-L-amino acid amidohydrolase (carboxylate-forming) (Acy3), found in Rattus norvegicus (Rat).